The chain runs to 329 residues: Glucosyl-3-phosphoglycerate synthase (329 aa).

UDP-alpha-D-glucose contacts are provided by residues 55–59 (PALDE), serine 86, lysine 119, and 139–141 (DSD). Aspartate 141 is a Mn(2+) binding site. 189–192 (GRVT) is a binding site for (2R)-3-phosphoglycerate. Position 234-237 (234-237 (YGVE)) interacts with UDP-alpha-D-glucose. Histidine 263 contributes to the Mn(2+) binding site. Residue asparagine 265 participates in (2R)-3-phosphoglycerate binding.

This sequence belongs to the glycosyltransferase 2 family. In terms of assembly, homodimer. Mg(2+) serves as cofactor. It depends on Mn(2+) as a cofactor.

It carries out the reaction an NDP-alpha-D-glucose + (2R)-3-phosphoglycerate = (2R)-2-O-(alpha-D-glucopyranosyl)-3-phospho-glycerate + a ribonucleoside 5'-diphosphate + H(+). It catalyses the reaction (2R)-3-phosphoglycerate + UDP-alpha-D-glucose = (2R)-2-O-(alpha-D-glucopyranosyl)-3-phospho-glycerate + UDP + H(+). The catalysed reaction is GDP-D-glucose + (2R)-3-phosphoglycerate = (2R)-2-O-(alpha-D-glucopyranosyl)-3-phospho-glycerate + GDP + H(+). Its function is as follows. Involved in the biosynthesis of 6-O-methylglucose lipopolysaccarides (MGLPs). Catalyzes the transfer of the glucose moiety from UDP-alpha-D-glucose (UDP-Glc) to the position 2 of 3-phospho-D-glycerate (3-PGA) to form glucosyl-3-phosphoglycerate (GPG). To a lesser extent can also use GDP-Glc but not UDP-Gal or UDP-GlcNAc as the sugar donor. The sequence is that of Glucosyl-3-phosphoglycerate synthase from Mycolicibacterium paratuberculosis (strain ATCC BAA-968 / K-10) (Mycobacterium paratuberculosis).